The primary structure comprises 340 residues: L-threonine 3-dehydrogenase (340 aa).

Residue cysteine 38 coordinates Zn(2+). Residues threonine 40 and histidine 43 each act as charge relay system in the active site. Histidine 63, glutamate 64, cysteine 93, cysteine 96, cysteine 99, and cysteine 107 together coordinate Zn(2+). NAD(+)-binding positions include isoleucine 175, aspartate 195, arginine 200, 262–264 (LGI), and 286–287 (IY).

The protein belongs to the zinc-containing alcohol dehydrogenase family. Homotetramer. It depends on Zn(2+) as a cofactor.

The protein localises to the cytoplasm. It catalyses the reaction L-threonine + NAD(+) = (2S)-2-amino-3-oxobutanoate + NADH + H(+). It functions in the pathway amino-acid degradation; L-threonine degradation via oxydo-reductase pathway; glycine from L-threonine: step 1/2. Its function is as follows. Catalyzes the NAD(+)-dependent oxidation of L-threonine to 2-amino-3-ketobutyrate. The sequence is that of L-threonine 3-dehydrogenase from Legionella pneumophila subsp. pneumophila (strain Philadelphia 1 / ATCC 33152 / DSM 7513).